We begin with the raw amino-acid sequence, 1156 residues long: Nuclear pore-associated protein 1 (1156 aa).

8 disordered regions span residues 1–60 (MGNL…RRPS), 155–204 (EGPR…FRCS), 219–266 (NSMS…PEPA), 481–515 (GGSY…TRES), 680–703 (TLVN…MHTT), 732–786 (NTQP…KTSL), 872–915 (STSF…SSFI), and 1026–1046 (APGP…SGTP). The segment covering 50 to 59 (LFRRNARRRP) has biased composition (basic residues). Basic and acidic residues predominate over residues 156 to 165 (GPRRVKKDED). Polar residues-rich tracts occupy residues 179 to 197 (PLSS…TQGD) and 219 to 231 (NSMS…SPAS). 4 stretches are compositionally biased toward polar residues: residues 680–692 (TLVN…SSSK), 732–750 (NTQP…SLPA), 884–915 (TTTS…SSFI), and 1028–1046 (GPSS…SGTP).

In terms of assembly, associates with the nuclear pore complex (NPC). As to expression, testis-specific in adults. In fetal brain expressed only from the paternal allele.

The protein resides in the nucleus. It is found in the nucleoplasm. The protein localises to the nucleus inner membrane. May be involved in spermatogenesis. The polypeptide is Nuclear pore-associated protein 1 (NPAP1) (Homo sapiens (Human)).